The primary structure comprises 218 residues: Probable glutamine ABC transporter permease protein GlnP (218 aa).

The next 3 membrane-spanning stretches (helical) occupy residues 19–39 (FLVTLYVAFISIILSFFFGLI), 65–85 (LPLLLIIFFTFFALPEIGIKL), and 188–208 (FFPIFLLAALMYFAVNYSLSL). Residues 19-210 (FLVTLYVAFI…AVNYSLSLAA (192 aa)) enclose the ABC transmembrane type-1 domain.

The protein belongs to the binding-protein-dependent transport system permease family. As to quaternary structure, the complex is composed of two ATP-binding proteins (GlnQ), two transmembrane proteins (GlnM and GlnP) and a solute-binding protein (GlnH).

It localises to the cell membrane. In terms of biological role, part of the ABC transporter complex GlnHMPQ involved in glutamine transport. Probably responsible for the translocation of the substrate across the membrane. This chain is Probable glutamine ABC transporter permease protein GlnP (glnP), found in Bacillus subtilis (strain 168).